Consider the following 811-residue polypeptide: Probable disease resistance protein At5g04720 (811 aa).

An RPW8 domain is found at 1 to 147 (MADIIGGEVV…KVDSLNEKLG (147 aa)). 2 NB-ARC domains span residues 180-242 (VGLD…VSQS) and 312-437 (TYDV…NVLV). 207-214 (GMSGSGKT) serves as a coordination point for ATP. LRR repeat units lie at residues 650–674 (FPKL…ICGI), 676–699 (SLNS…SKLK), 700–722 (ALQL…ICEL), 724–746 (RLKY…IGKV), and 748–769 (TLEK…VVLL).

This sequence belongs to the disease resistance NB-LRR family.

In terms of biological role, probable disease resistance protein. This is Probable disease resistance protein At5g04720 from Arabidopsis thaliana (Mouse-ear cress).